Here is a 96-residue protein sequence, read N- to C-terminus: UPF0235 protein YE3436 (96 aa).

The protein belongs to the UPF0235 family.

This chain is UPF0235 protein YE3436, found in Yersinia enterocolitica serotype O:8 / biotype 1B (strain NCTC 13174 / 8081).